We begin with the raw amino-acid sequence, 430 residues long: Ribosomal protein uS12 methylthiotransferase RimO (430 aa).

Residues 2-119 (ISVYSISLGC…WPEMIGRALG (118 aa)) form the MTTase N-terminal domain. Residues Cys11, Cys46, Cys81, Cys145, Cys149, and Cys152 each coordinate [4Fe-4S] cluster. The 231-residue stretch at 131-361 (STGPSYAYLK…MEVQAEISEE (231 aa)) folds into the Radical SAM core domain. The region spanning 364–430 (EGFTGSDEDV…SRTYDLVALS (67 aa)) is the TRAM domain.

The protein belongs to the methylthiotransferase family. RimO subfamily. [4Fe-4S] cluster is required as a cofactor.

Its subcellular location is the cytoplasm. It catalyses the reaction L-aspartate(89)-[ribosomal protein uS12]-hydrogen + (sulfur carrier)-SH + AH2 + 2 S-adenosyl-L-methionine = 3-methylsulfanyl-L-aspartate(89)-[ribosomal protein uS12]-hydrogen + (sulfur carrier)-H + 5'-deoxyadenosine + L-methionine + A + S-adenosyl-L-homocysteine + 2 H(+). Functionally, catalyzes the methylthiolation of an aspartic acid residue of ribosomal protein uS12. The sequence is that of Ribosomal protein uS12 methylthiotransferase RimO from Oleidesulfovibrio alaskensis (strain ATCC BAA-1058 / DSM 17464 / G20) (Desulfovibrio alaskensis).